The chain runs to 267 residues: Undecaprenyl-diphosphatase (267 aa).

Helical transmembrane passes span 1 to 21 (MTYF…FLPI), 39 to 59 (QGLA…VIYF), 83 to 103 (SNLA…GLLF), 111 to 131 (LRSA…LWWV), 149 to 169 (ALFL…RSGI), 189 to 209 (FLMS…KLAM), 218 to 238 (LLST…HFFL), and 246 to 266 (MMPF…WLAL).

The protein belongs to the UppP family.

It is found in the cell inner membrane. It carries out the reaction di-trans,octa-cis-undecaprenyl diphosphate + H2O = di-trans,octa-cis-undecaprenyl phosphate + phosphate + H(+). In terms of biological role, catalyzes the dephosphorylation of undecaprenyl diphosphate (UPP). Confers resistance to bacitracin. This is Undecaprenyl-diphosphatase from Aliivibrio fischeri (strain ATCC 700601 / ES114) (Vibrio fischeri).